Consider the following 551-residue polypeptide: MAAKDVKFGSEARAKMLRGVNILADAVKVTLGPKGRNVVLDKSFGAPSITKDGVSVAREIELEDKFENMGAQMVKEVASKANDVAGDGTTTATLLAQSIVNEGLKAVAAGMNPMDLKRGIDQAVIKAVKELKKLSVPCSDSKAITQVGTISANADETVGSLISEAMDKVGNDGVITVEEGTGLEDELDVVKGMQFDRGYLSPYFINKPETGNIELENPYILMVDKKISNIRDILSLLESVAKSGKPLLIIAEDLEGEALATLVVNSMRGIVKIAAVKAPGFGDRRKAMLQDISILTFLYNSDVISEELAMDLDKTTLEDLGQAKGVVITKDHTIIVGSGKKEIFKQILIRQQLIESTSDYDKEKLNERLAKLSGGVAVLKVGAATEVEMKEKKARVEDALHATRAAVEEGVVAGGGVALVRVAEKISRLKGQNEDQNVGIRVAVRSMEAPLRQIVANSGEEPSVVTNNVKDGVGNYGYNAATDQYGDMIKFGILDPTKVTRSALQYAASVAGLMITTECMVTDSPKEDKSSDMPSPSAGGMGGMGGMGGMM.

Residues 30–33, Lys51, 87–91, Gly415, 479–481, and Asp495 contribute to the ATP site; these read TLGP, DGTTT, and NAA. Residues 523–551 form a disordered region; sequence DSPKEDKSSDMPSPSAGGMGGMGGMGGMM. A compositionally biased stretch (gly residues) spans 539–551; sequence GGMGGMGGMGGMM.

Belongs to the chaperonin (HSP60) family. In terms of assembly, forms a cylinder of 14 subunits composed of two heptameric rings stacked back-to-back. Interacts with the co-chaperonin GroES.

The protein localises to the cytoplasm. It carries out the reaction ATP + H2O + a folded polypeptide = ADP + phosphate + an unfolded polypeptide.. Together with its co-chaperonin GroES, plays an essential role in assisting protein folding. The GroEL-GroES system forms a nano-cage that allows encapsulation of the non-native substrate proteins and provides a physical environment optimized to promote and accelerate protein folding. This chain is Chaperonin GroEL, found in Buchnera aphidicola subsp. Chaetophorus leucomelas.